The sequence spans 457 residues: Phosphomethylpyrimidine synthase (457 aa).

Substrate-binding positions include Asn80, Met109, Tyr139, His175, Ser195–Gly197, Asp236–Arg239, and Glu275. His279 serves as a coordination point for Zn(2+). Tyr302 is a substrate binding site. A Zn(2+)-binding site is contributed by His343. [4Fe-4S] cluster is bound by residues Cys423, Cys426, and Cys431.

It belongs to the ThiC family. [4Fe-4S] cluster serves as cofactor.

It carries out the reaction 5-amino-1-(5-phospho-beta-D-ribosyl)imidazole + S-adenosyl-L-methionine = 4-amino-2-methyl-5-(phosphooxymethyl)pyrimidine + CO + 5'-deoxyadenosine + formate + L-methionine + 3 H(+). The protein operates within cofactor biosynthesis; thiamine diphosphate biosynthesis. Catalyzes the synthesis of the hydroxymethylpyrimidine phosphate (HMP-P) moiety of thiamine from aminoimidazole ribotide (AIR) in a radical S-adenosyl-L-methionine (SAM)-dependent reaction. This chain is Phosphomethylpyrimidine synthase, found in Trichormus variabilis (strain ATCC 29413 / PCC 7937) (Anabaena variabilis).